We begin with the raw amino-acid sequence, 261 residues long: MARIALGIRYDGSAYHGWQVQEALKTVQGEVEKALSAVANHPVFVTCAGRTDAGVHASAQVAHFDTTAYRSDHAWVFGANSNLPHDISILWAKAVEEDFHARYSAMARRYRYIVYNHEIRPAILRKAIGWHYRPLDEKRMQAGAQYLIGEHDFSSFQGAGCQSRTPVRKIFQIEIYRIRRMVVIEVQANAFLLHMVRNIAGVLIAIGSGEKHPDWAQTVLKAKDRRQGGVTVPPNGLYLVEVNYPPNFKLPRMPLGPFFLP.

D52 (nucleophile) is an active-site residue. Residue Y110 coordinates substrate.

Belongs to the tRNA pseudouridine synthase TruA family. Homodimer.

It carries out the reaction uridine(38/39/40) in tRNA = pseudouridine(38/39/40) in tRNA. Its function is as follows. Formation of pseudouridine at positions 38, 39 and 40 in the anticodon stem and loop of transfer RNAs. In Coxiella burnetii (strain CbuK_Q154) (Coxiella burnetii (strain Q154)), this protein is tRNA pseudouridine synthase A.